Here is a 258-residue protein sequence, read N- to C-terminus: Phosphate import ATP-binding protein PstB (258 aa).

The 242-residue stretch at Leu12–Ile253 folds into the ABC transporter domain. Gly44 to Ser51 serves as a coordination point for ATP.

It belongs to the ABC transporter superfamily. Phosphate importer (TC 3.A.1.7) family. In terms of assembly, the complex is composed of two ATP-binding proteins (PstB), two transmembrane proteins (PstC and PstA) and a solute-binding protein (PstS).

It localises to the cell inner membrane. The enzyme catalyses phosphate(out) + ATP + H2O = ADP + 2 phosphate(in) + H(+). Its function is as follows. Part of the ABC transporter complex PstSACB involved in phosphate import. Responsible for energy coupling to the transport system. This Bordetella parapertussis (strain 12822 / ATCC BAA-587 / NCTC 13253) protein is Phosphate import ATP-binding protein PstB.